A 289-amino-acid chain; its full sequence is Ribosomal RNA small subunit methyltransferase A (289 aa).

S-adenosyl-L-methionine-binding residues include N21, L23, G48, E69, D94, and N120.

It belongs to the class I-like SAM-binding methyltransferase superfamily. rRNA adenine N(6)-methyltransferase family. RsmA subfamily.

The protein resides in the cytoplasm. The catalysed reaction is adenosine(1518)/adenosine(1519) in 16S rRNA + 4 S-adenosyl-L-methionine = N(6)-dimethyladenosine(1518)/N(6)-dimethyladenosine(1519) in 16S rRNA + 4 S-adenosyl-L-homocysteine + 4 H(+). Functionally, specifically dimethylates two adjacent adenosines (A1518 and A1519) in the loop of a conserved hairpin near the 3'-end of 16S rRNA in the 30S particle. May play a critical role in biogenesis of 30S subunits. This chain is Ribosomal RNA small subunit methyltransferase A, found in Actinobacillus pleuropneumoniae serotype 7 (strain AP76).